The chain runs to 1207 residues: Putative coatomer subunit alpha (1207 aa).

WD repeat units follow at residues 9 to 50 (SRSS…DRFD), 51 to 90 (GHDG…LLFS), 93 to 134 (GHMD…AILT), 135 to 174 (GHSH…MKNA), 210 to 249 (GHDR…AWEV), 254 to 293 (GHFN…AVQT), 296 to 336 (RDND…HALN), and 370 to 411 (SAWL…NSLP). Phosphoserine is present on residues S409 and S942.

In terms of assembly, oligomeric complex that consists of at least the alpha, beta, beta', gamma, delta, epsilon and zeta subunits.

It is found in the cytoplasm. Its subcellular location is the golgi apparatus membrane. Its function is as follows. The coatomer is a cytosolic protein complex that binds to dilysine motifs and reversibly associates with Golgi non-clathrin-coated vesicles, which further mediate biosynthetic protein transport from the ER, via the Golgi up to the trans Golgi network. Coatomer complex is required for budding from Golgi membranes, and is essential for the retrograde Golgi-to-ER transport of dilysine-tagged proteins. The polypeptide is Putative coatomer subunit alpha (Schizosaccharomyces pombe (strain 972 / ATCC 24843) (Fission yeast)).